The primary structure comprises 309 residues: (S)-sulfolactate dehydrogenase (309 aa).

NAD(+) is bound by residues 151–152, Asp171, 231–233, and Asp257; these read GI and TAR. Arg233 is an active-site residue. The active site involves Glu262. The Proton donor role is filled by His281. 281–284 contacts NAD(+); it reads HIAG.

This sequence belongs to the D-isomer specific 2-hydroxyacid dehydrogenase family.

It catalyses the reaction (2S)-3-sulfolactate + NAD(+) = 3-sulfopyruvate + NADH + H(+). Functionally, dehydrogenase of the (R,S)-sulfolactate degradation pathway that only acts on the (S)-enantiomer of 3-sulfolactate. Together with ComC, provides a racemase system that converts (2S)-3-sulfolactate to (2R)-3-sulfolactate, which is degraded further by (2R)-sulfolactate sulfo-lyase. Specific for NAD. Also able to form sulfolactate from sulfopyruvate. This Chromohalobacter salexigens (strain ATCC BAA-138 / DSM 3043 / CIP 106854 / NCIMB 13768 / 1H11) protein is (S)-sulfolactate dehydrogenase (slcC).